The following is a 355-amino-acid chain: Uroporphyrinogen decarboxylase (355 aa).

Residues 27-31 (RQAGR), Asp-77, Tyr-154, Thr-209, and His-327 each bind substrate.

The protein belongs to the uroporphyrinogen decarboxylase family. As to quaternary structure, homodimer.

The protein localises to the cytoplasm. The enzyme catalyses uroporphyrinogen III + 4 H(+) = coproporphyrinogen III + 4 CO2. The protein operates within porphyrin-containing compound metabolism; protoporphyrin-IX biosynthesis; coproporphyrinogen-III from 5-aminolevulinate: step 4/4. Catalyzes the decarboxylation of four acetate groups of uroporphyrinogen-III to yield coproporphyrinogen-III. The protein is Uroporphyrinogen decarboxylase of Aeromonas salmonicida (strain A449).